The sequence spans 381 residues: Probable serine/threonine-protein kinase PBL25 (381 aa).

The S-palmitoyl cysteine moiety is linked to residue cysteine 3. The disordered stretch occupies residues 16–41; sequence GSSMPAPYKQPNSPKRTTGEVVAKNA. The residue at position 54 (threonine 54) is a Phosphothreonine. The Protein kinase domain maps to 65–342; sequence FRQECLIGEG…SDVITALSFL (278 aa). Residues 71–79 and lysine 94 each bind ATP; that span reads IGEGGFGRV. Tyrosine 139 carries the post-translational modification Phosphotyrosine. Catalysis depends on aspartate 192, which acts as the Proton acceptor. Residues serine 196 and serine 226 each carry the phosphoserine modification. A Phosphothreonine modification is found at threonine 232. The residue at position 240 (tyrosine 240) is a Phosphotyrosine. Positions 347-381 are disordered; it reads NSSNTGSNHLQQNRSNKYQDAVQWDSSPRYANSQM. Over residues 355 to 381 the composition is skewed to polar residues; sequence HLQQNRSNKYQDAVQWDSSPRYANSQM.

It belongs to the protein kinase superfamily. Ser/Thr protein kinase family.

The protein localises to the cell membrane. The enzyme catalyses L-seryl-[protein] + ATP = O-phospho-L-seryl-[protein] + ADP + H(+). The catalysed reaction is L-threonyl-[protein] + ATP = O-phospho-L-threonyl-[protein] + ADP + H(+). In terms of biological role, may be involved in plant defense signaling. This chain is Probable serine/threonine-protein kinase PBL25, found in Arabidopsis thaliana (Mouse-ear cress).